Reading from the N-terminus, the 584-residue chain is DNA ligase (584 aa).

ATP is bound at residue glutamate 249. The active-site N6-AMP-lysine intermediate is lysine 251. Positions 256, 271, 301, 341, 416, and 422 each coordinate ATP.

The protein belongs to the ATP-dependent DNA ligase family. Mg(2+) is required as a cofactor.

It catalyses the reaction ATP + (deoxyribonucleotide)n-3'-hydroxyl + 5'-phospho-(deoxyribonucleotide)m = (deoxyribonucleotide)n+m + AMP + diphosphate.. In terms of biological role, DNA ligase that seals nicks in double-stranded DNA during DNA replication, DNA recombination and DNA repair. The polypeptide is DNA ligase (Pyrobaculum islandicum (strain DSM 4184 / JCM 9189 / GEO3)).